The chain runs to 180 residues: Interleukin-1-binding protein (180 aa).

The N-terminal stretch at 1–20 (MSILPVIFLPIFFYSPFVQT) is a signal peptide. N80, N103, and N113 each carry an N-linked (GlcNAc...) asparagine; by host glycan.

This sequence belongs to the interleukin-1 receptor family. In terms of assembly, interacts with mouse Il1b.

Its subcellular location is the secreted. Functionally, may reduce the host inflammatory response by interacting with inteleukin-1 beta (Il1b) and thus decreasing the association between IL1B and its cellular receptor. The polypeptide is Interleukin-1-binding protein (OPG201) (Monkeypox virus).